A 577-amino-acid chain; its full sequence is Arginine--tRNA ligase (577 aa).

Positions 122–132 match the 'HIGH' region motif; the sequence is PNVAKEMHVGH.

It belongs to the class-I aminoacyl-tRNA synthetase family. In terms of assembly, monomer.

It localises to the cytoplasm. It carries out the reaction tRNA(Arg) + L-arginine + ATP = L-arginyl-tRNA(Arg) + AMP + diphosphate. The chain is Arginine--tRNA ligase from Escherichia coli O157:H7 (strain EC4115 / EHEC).